The chain runs to 1342 residues: Cytokinesis protein sepH (1342 aa).

The segment covering 1–10 has biased composition (low complexity); that stretch reads MVSRSSEGAE. Residues 1–47 form a disordered region; it reads MVSRSSEGAEGPPPSAPKPPNTPAKSRLSRLGSSPSKREDKSRDDRM. Residues 11–22 are compositionally biased toward pro residues; the sequence is GPPPSAPKPPNT. Residues 36–47 are compositionally biased toward basic and acidic residues; it reads SKREDKSRDDRM. The 248-residue stretch at 61-308 folds into the Protein kinase domain; it reads YQLGDCLGKG…ARKLLKHPWI (248 aa). Residues 67-75 and lysine 90 contribute to the ATP site; that span reads LGKGAFGSV. The active-site Proton acceptor is aspartate 180. 3 disordered regions span residues 336–396, 441–486, and 552–591; these read NEAL…EEDN, IKSD…QLQE, and ADENVDPFESSPSKEAIRNRASAEDVMGQQPQLRKQISVK. Residues 369-379 show a composition bias toward polar residues; sequence KDTLPSPVSRN. Residues 658-695 are a coiled coil; the sequence is FAQLEEGLDEMDLEANIARDKHARLRNQVEGLVSSLKT. The interval 1201 to 1342 is disordered; it reads SEAYGMGKRK…QTQADADWTP (142 aa). Over residues 1207 to 1217 the composition is skewed to basic residues; that stretch reads GKRKPMVRRRS. 2 stretches are compositionally biased toward polar residues: residues 1218-1244 and 1273-1290; these read TSATPPNLLANQSAPSTPQMNRTSQSK and DGSTPSLTAGLNGSTGAS. Residues 1315–1324 show a composition bias toward low complexity; that stretch reads RPSSSLSRRQ.

Belongs to the protein kinase superfamily. Ser/Thr protein kinase family. CDC7 subfamily. Mg(2+) is required as a cofactor.

It catalyses the reaction L-seryl-[protein] + ATP = O-phospho-L-seryl-[protein] + ADP + H(+). The catalysed reaction is L-threonyl-[protein] + ATP = O-phospho-L-threonyl-[protein] + ADP + H(+). Its function is as follows. Required for early events during cytokinesis including localization of cytoskeletal components to the cytokinetic ring. The sequence is that of Cytokinesis protein sepH from Aspergillus terreus (strain NIH 2624 / FGSC A1156).